The following is a 300-amino-acid chain: Homoserine kinase (300 aa).

82 to 92 (RPGSGLGSSAA) contributes to the ATP binding site.

It belongs to the GHMP kinase family. Homoserine kinase subfamily.

It localises to the cytoplasm. The enzyme catalyses L-homoserine + ATP = O-phospho-L-homoserine + ADP + H(+). It functions in the pathway amino-acid biosynthesis; L-threonine biosynthesis; L-threonine from L-aspartate: step 4/5. Functionally, catalyzes the ATP-dependent phosphorylation of L-homoserine to L-homoserine phosphate. The sequence is that of Homoserine kinase from Methanocella arvoryzae (strain DSM 22066 / NBRC 105507 / MRE50).